Here is a 282-residue protein sequence, read N- to C-terminus: ATP synthase gamma chain (282 aa).

This sequence belongs to the ATPase gamma chain family. F-type ATPases have 2 components, CF(1) - the catalytic core - and CF(0) - the membrane proton channel. CF(1) has five subunits: alpha(3), beta(3), gamma(1), delta(1), epsilon(1). CF(0) has three main subunits: a, b and c.

The protein resides in the cell membrane. In terms of biological role, produces ATP from ADP in the presence of a proton gradient across the membrane. The gamma chain is believed to be important in regulating ATPase activity and the flow of protons through the CF(0) complex. The polypeptide is ATP synthase gamma chain (Clostridium botulinum (strain ATCC 19397 / Type A)).